The primary structure comprises 2364 residues: MNLVNKAQLQKMAYVKFRIQEDEYVAILNALEEYHNMSESSVVEKYLKLKDINNLTDNYLNTYKKSGRNKALKKFKEYLTMEVLELKNNSLTPVEKNLHFIWIGGQINDTAINYINQWKDVNSDYTVKVFYDSNAFLINTLKKTIVESATNNTLESFRENLNDPEFDYNKFYRKRMEIIYDKQKHFIDYYKSQIEENPEFIIDNIIKTYLSNEYSKDLEALNKYIEESLNKITANNGNDIRNLEKFADEDLVRLYNQELVERWNLAAASDILRISMLKEDGGVYLDVDMLPGIQPDLFKSINKPDSITNTSWEMIKLEAIMKYKEYIPGYTSKNFDMLDEEVQRSFESALSSKSDKSEIFLPLDDIKVSPLEVKIAFANNSVINQALISLKDSYCSDLVINQIKNRYKILNDNLNPSINEGTDFNTTMKIFSDKLASISNEDNMMFMIKITNYLKVGFAPDVRSTINLSGPGVYTGAYQDLLMFKDNSTNIHLLEPELRNFEFPKTKISQLTEQEITSLWSFNQARAKSQFEEYKKGYFEGALGEDDNLDFAQNTVLDKDYVSKKILSSMKTRNKEYIHYIVQLQGDKISYEASCNLFSKDPYSSILYQKNIEGSETAYYYSVADAEIKEIDKYRIPYQISNKRKIKLTFIGHGKSEFNTDTFANLDVDSLSSEIETILNLAKADISPKYIEINLLGCNMFSYSISAEETYPGKLLLKIKDRVSELMPSISQDSITVSANQYEVRINEEGKREILDHSGKWINKEESIIKDISSKEYISFNPKENKIIVKSKYLHELSTLLQEIRNNANSSDIDLEKKVMLTECEINVASNIDRQIVEGRIEEAKNLTSDSINYIKNEFKLIESISDSLYDLKHQNGLDDSHFISFEDISKTENGFRIRFINKETGNSIFIETEKEIFSEYATHISKEISNIKDTIFDNVNGKLVKKVNLDAAHEVNTLNSAFFIQSLIEYNTTKESLSNLSVAMKVQVYAQLFSTGLNTITDASKVVELVSTALDETIDLLPTLSEGLPIIATIIDGVSLGAAIKELSETNDPLLRQEIEAKIGIMAVNLTAASTAIVTSALGIASGFSILLVPLAGISAGIPSLVNNELILQDKATKVIDYFKHISLAETEGAFTLLDDKIIMPQDDLVLSEIDFNNNSITLGKCEIWRAEGGSGHTLTDDIDHFFSSPSITYRKPWLSIYDVLNIKKEKIDFSKDLMVLPNAPNRVFGYEMGWTPGFRSLDNDGTKLLDRIRDHYEGQFYWRYFAFIADALITKLKPRYEDTNVRINLDGNTRSFIVPVITTEQIRKNLSYSFYGSGGSYSLSLSPYNMNIDLNLVENDTWVIDVDNVVKNITIESDEIQKGELIENILSKLNIEDNKIILNNHTINFYGDINESNRFISLTFSILEDINIIIEIDLVSKSYKILLSGNCMKLIENSSDIQQKIDHIGFNGEHQKYIPYSYIDNETKYNGFIDYSKKEGLFTAEFSNESIIRNIYMPDSNNLFIYSSKDLKDIRIINKGDVKLLIGNYFKDDMKVSLSFTIEDTNTIKLNGVYLDENGVAQILKFMNNAKSALNTSNSLMNFLESINIKNIFYNNLDPNIEFILDTNFIISGSNSIGQFELICDKDKNIQPYFIKFKIKETSYTLYVGNRQNLIVEPSYHLDDSGNISSTVINFSQKYLYGIDRYVNKVIIAPNLYTDEINITPVYKPNYICPEVIILDANYINEKINVNINDLSIRYVWDNDGSDLILIANSEEDNQPQVKIRFVNVFKSDTAADKLSFNFSDKQDVSVSKIISTFSLAAYSDGFFDYEFGLVSLDNDYFYINSFGNMVSGLIYINDSLYYFKPPKNNLITGFTTIDGNKYYFDPTKSGAASIGEITIDGKDYYFNKQGILQVGVINTSDGLKYFAPAGTLDENLEGESVNFIGKLNIDGKIYYFEDNYRAAVEWKLLDDETYYFNPKTGEALKGLHQIGDNKYYFDDNGIMQTGFITINDKVFYFNNDGVMQVGYIEVNGKYFYFGKNGERQLGVFNTPDGFKFFGPKDDDLGTEEGELTLYNGILNFNGKIYFFDISNTAVVGWGTLDDGSTYYFDDNTAEACIGLTVINDCKYYFDDNGIRQLGFITINDNIFYFSESGKIELGYQNINGNYFYIDESGLVLIGVFDTPDGYKYFAPLNTVNDNIYGQAVKYSGLVRVNEDVYYFGETYKIETGWIENETDKYYFDPETKKAYKGINVVDDIKYYFDENGIMRTGLISFENNNYYFNEDGKMQFGYLNIKDKMFYFGKDGKMQIGVFNTPDGFKYFAHQNTLDENFEGESINYTGWLDLDGKRYYFTDEYIAATGSLTIDGYNYYFDPDTAELVVSE.

A four-helical bundle region spans residues 1–91 (MNLVNKAQLQ…EVLELKNNSL (91 aa)). The GT44 domain maps to 96–468 (KNLHFIWIGG…APDVRSTINL (373 aa)). The interval 96–468 (KNLHFIWIGG…APDVRSTINL (373 aa)) is glucosyltransferase region. UDP-alpha-D-glucose is bound by residues 101 to 103 (IWI), Asn139, 265 to 270 (LAAASD), and 286 to 288 (DVD). Asp288, Glu515, and Ser518 together coordinate Mg(2+). 518 to 520 (SLW) contributes to the UDP-alpha-D-glucose binding site. The interval 544–799 (GEDDNLDFAQ…KSKYLHELST (256 aa)) is autoprocessing region. Glu545 and Asp546 together coordinate Zn(2+). The 208-residue stretch at 567 to 774 (LSSMKTRNKE…EESIIKDISS (208 aa)) folds into the Peptidase C80 domain. 1D-myo-inositol hexakisphosphate contacts are provided by Tyr577, Lys600, and Lys647. A Zn(2+)-binding site is contributed by His653. His653 (for protease activity) is an active-site residue. The active-site Nucleophile; for protease activity is Cys698. Residue His757 coordinates Zn(2+). 3 residues coordinate 1D-myo-inositol hexakisphosphate: Lys764, Lys775, and Lys792. The interval 800–1500 (LLQEIRNNAN…ESIIRNIYMP (701 aa)) is translocation region. Interaction with host SEMA6A and SEMA6B regions lie at residues 1433-1438 (CMKLIE), 1466-1471 (DNETKY), 1484-1495 (FTAEFSNESIIR), 1504-1511 (NLFIYSSK), and 1596-1601 (YNNLDP). Cell wall-binding repeat units lie at residues 1813–1832 (EFGL…FGNM), 1833–1852 (VSGL…PKNN), 1854–1873 (ITGF…TKSG), 1876–1895 (SIGE…QGIL), 1926–1945 (FIGK…NYRA), 1946–1965 (AVEW…KTGE), 1967–1986 (LKGL…NGIM), 1987–2006 (QTGF…DGVM), 2007–2026 (QVGY…NGER), 2057–2076 (YNGI…SNTA), 2077–2097 (VVGW…NTAE), 2099–2118 (CIGL…NGIR), 2119–2138 (QLGF…SGKI), 2139–2158 (ELGY…SGLV), 2209–2224 (ETGW…YFDP), 2227–2249 (KKAY…NGIM), 2250–2269 (RTGL…DGKM), 2270–2289 (QFGY…DGKM), 2320–2339 (YTGW…EYIA), and 2340–2359 (ATGS…DTAE). The segment at 1835-2364 (GLIYINDSLY…PDTAELVVSE (530 aa)) is receptor-binding (CROPS) region.

The protein belongs to the clostridial glucosylating toxin (LCGT) family. As to quaternary structure, homomultimer; forms an inactive homomultimer at pH 8, which dissociates at pH 4, leading to cytotoxicity. Interacts with host SEMA6A; interaction promotes toxin entry into host cell. Interacts with host SEMA6B; interaction promotes toxin entry into host cell. Zn(2+) serves as cofactor. Requires Mn(2+) as cofactor. The cofactor is Mg(2+). In terms of processing, undergoes autocatalytic cleavage to release the N-terminal part (Glucosyltransferase TcsL), which constitutes the active part of the toxin, in the host cytosol. 1D-myo-inositol hexakisphosphate-binding (InsP6) activates the peptidase C80 domain and promotes autoprocessing.

The protein localises to the secreted. It localises to the host endosome membrane. It is found in the host cytoplasm. The protein resides in the host cytosol. Its subcellular location is the host cell membrane. The catalysed reaction is L-threonyl-[protein] + UDP-alpha-D-glucose = 3-O-(alpha-D-glucosyl)-L-threonyl-[protein] + UDP + H(+). Protease activity is activated upon binding to 1D-myo-inositol hexakisphosphate (InsP6), which induces conformational reorganization. Its function is as follows. Precursor of a cytotoxin that targets the vascular endothelium, inducing an anti-inflammatory effect and resulting in lethal toxic shock syndrome. TcsL constitutes the main toxin that mediates the pathology of P.sordellii infection, an anaerobic Gram-positive bacterium found in soil and in the gastrointestinal and vaginal tracts of animals and humans; although the majority of carriers are asymptomatic, pathogenic P.sordellii infections arise rapidly and are highly lethal. This form constitutes the precursor of the toxin: it enters into host cells and mediates autoprocessing to release the active toxin (Glucosyltransferase TcsL) into the host cytosol. Targets vascular endothelium by binding to the semaphorin proteins SEMA6A and SEMA6B, and enters host cells via clathrin-mediated endocytosis. Once entered into host cells, acidification in the endosome promotes the membrane insertion of the translocation region and formation of a pore, leading to translocation of the GT44 and peptidase C80 domains across the endosomal membrane. This activates the peptidase C80 domain and autocatalytic processing, releasing the N-terminal part (Glucosyltransferase TcsL), which constitutes the active part of the toxin, in the cytosol. Functionally, active form of the toxin, which is released into the host cytosol following autoprocessing and inactivates small GTPases. Acts by mediating monoglucosylation of small GTPases of the Ras (H-Ras/HRAS, K-Ras/KRAS and N-Ras/NRAS) family in host cells at the conserved threonine residue located in the switch I region ('Thr-37/35'), using UDP-alpha-D-glucose as the sugar donor. Also able to catalyze monoglucosylation of some members of the Rho family (Rac1 and Rap2A), but with less efficiency than with Ras proteins. Monoglucosylation of host small GTPases completely prevents the recognition of the downstream effector, blocking the GTPases in their inactive form and leading to apoptosis. Induces an anti-inflammatory effect, mainly by inactivating Ras proteins which results in blockage of the cell cycle and killing of immune cells. The absence or moderate local inflammatory response allows C.sordellii spreading in deep tissues, production of toxin which is released in the general circulation and causes a toxic shock syndrome. This Paraclostridium sordellii (strain ATCC 9714 / DSM 2141 / JCM 3814 / LMG 15708 / NCIMB 10717 / 211) (Clostridium sordellii) protein is Cytotoxin-L.